Reading from the N-terminus, the 327-residue chain is Phenylalanine--tRNA ligase alpha subunit (327 aa).

Glu-252 contributes to the Mg(2+) binding site.

Belongs to the class-II aminoacyl-tRNA synthetase family. Phe-tRNA synthetase alpha subunit type 1 subfamily. As to quaternary structure, tetramer of two alpha and two beta subunits. Requires Mg(2+) as cofactor.

The protein localises to the cytoplasm. It catalyses the reaction tRNA(Phe) + L-phenylalanine + ATP = L-phenylalanyl-tRNA(Phe) + AMP + diphosphate + H(+). The sequence is that of Phenylalanine--tRNA ligase alpha subunit from Shewanella denitrificans (strain OS217 / ATCC BAA-1090 / DSM 15013).